Reading from the N-terminus, the 102-residue chain is Alpha-ketoglutarate dehydrogenase component 4 (102 aa).

At G2 the chain carries N-acetylglycine. K4 bears the N6-succinyllysine mark. The interval 23-70 (KFPNRRDKPKLSASEALGSAALPSHSSAISQHSKGSTSPDLLMHQGPP) is disordered. Residues 33–46 (LSASEALGSAALPS) show a composition bias toward low complexity. The span at 47–61 (HSSAISQHSKGSTSP) shows a compositional bias: polar residues. A phosphoserine mark is found at S48, S60, and S89.

This sequence belongs to the alpha-ketoglutarate dehydrogenase component 4 family. Component of the 2-oxoglutarate dehydrogenase complex (OGDHC), composed of OGDH (2-oxoglutarate dehydrogenase; also called E1 subunit), DLST (dihydrolipoamide succinyltransferase; also called E2 subunit) and DLD (dihydrolipoamide dehydrogenase; also called E3 subunit), and the assembly factor KGD4. Within OGDHC complex, interacts (via N-terminus) with E3 subunit and (via C-terminus) with E2 subunit.

It localises to the mitochondrion. Molecular adapter that is necessary to form a stable 2-oxoglutarate dehydrogenase enzyme complex (OGDHC). Enables the specific recruitment of E3 subunit to E2 subunit in the 2-oxoglutarate dehydrogenase complex (OGDHC). This Mus musculus (Mouse) protein is Alpha-ketoglutarate dehydrogenase component 4.